The following is a 225-amino-acid chain: 2-amino-5-formylamino-6-ribosylaminopyrimidin-4(3H)-one 5'-monophosphate deformylase (225 aa).

Glu-28, His-30, Asp-39, and His-107 together coordinate Fe cation.

The protein belongs to the creatininase superfamily. FAPy deformylase family. Homodimer. Fe(2+) serves as cofactor. The cofactor is Zn(2+).

It catalyses the reaction 2-amino-5-formylamino-6-(5-phospho-D-ribosylamino)pyrimidin-4(3H)-one + H2O = 2,5-diamino-6-(1-D-ribosylamino)pyrimidin-4(3H)-one 5'-phosphate + formate + H(+). The protein operates within cofactor biosynthesis; coenzyme F420 biosynthesis. It functions in the pathway cofactor biosynthesis; riboflavin biosynthesis. Its function is as follows. Catalyzes the hydrolysis of the formamide of 2-amino-5-formylamino-6-ribosylamino-4(3H)-pyrimidinone 5'-monophosphate (FAPy) to form 2,5-diamino-6-ribosylamino-4(3H)-pyrimidinone 5'-phosphate (APy). This is 2-amino-5-formylamino-6-ribosylaminopyrimidin-4(3H)-one 5'-monophosphate deformylase from Methanocaldococcus sp. (strain FS406-22).